Consider the following 98-residue polypeptide: NADH-ubiquinone oxidoreductase chain 4L (98 aa).

A run of 3 helical transmembrane segments spans residues 1-21 (MIPT…GMLT), 27-47 (VASL…ATLI), and 61-81 (IILL…LISI).

It belongs to the complex I subunit 4L family. In terms of assembly, core subunit of respiratory chain NADH dehydrogenase (Complex I) which is composed of 45 different subunits.

It is found in the mitochondrion inner membrane. The enzyme catalyses a ubiquinone + NADH + 5 H(+)(in) = a ubiquinol + NAD(+) + 4 H(+)(out). Functionally, core subunit of the mitochondrial membrane respiratory chain NADH dehydrogenase (Complex I) which catalyzes electron transfer from NADH through the respiratory chain, using ubiquinone as an electron acceptor. Part of the enzyme membrane arm which is embedded in the lipid bilayer and involved in proton translocation. The polypeptide is NADH-ubiquinone oxidoreductase chain 4L (MT-ND4L) (Macaca hecki (Heck's macaque)).